Consider the following 319-residue polypeptide: Lipopolysaccharide heptosyltransferase 1 (319 aa).

ADP-L-glycero-beta-D-manno-heptose is bound by residues T187, T188, K192, E222, M242, D261, T262, G263, and H266.

It belongs to the glycosyltransferase 9 family.

It is found in the cell inner membrane. The enzyme catalyses an alpha-Kdo-(2-&gt;4)-alpha-Kdo-(2-&gt;6)-lipid A + ADP-L-glycero-beta-D-manno-heptose = an L-alpha-D-Hep-(1-&gt;5)-[alpha-Kdo-(2-&gt;4)]-alpha-Kdo-(2-&gt;6)-lipid A + ADP + H(+). The catalysed reaction is alpha-Kdo-(2-&gt;4)-alpha-Kdo-(2-&gt;6)-lipid A (E. coli) + ADP-L-glycero-beta-D-manno-heptose = L-alpha-D-Hep-(1-&gt;5)-[alpha-Kdo-(2-&gt;4)]-alpha-Kdo-(2-&gt;6)-lipid A (E. coli) + ADP + H(+). Its pathway is bacterial outer membrane biogenesis; LPS core biosynthesis. Glycosyltransferase involved in the biosynthesis of the core oligosaccharide region of lipopolysaccharide (LPS). Catalyzes the addition of the first heptose unit to one 3-deoxy-D-manno-octulosonic acid (Kdo) residue of the Kdo2-lipid A module. The analog ADP-mannose can serve as an alternative donor in place of ADP-L-glycero-D-manno-heptose for the glycosylation of Kdo2-lipid A. Displays no activity with ADP-glucose, GDP-mannose, UDP-glucose or UDP-galactose. This is Lipopolysaccharide heptosyltransferase 1 from Escherichia coli (strain K12).